The sequence spans 429 residues: Adenylosuccinate synthetase (429 aa).

Residues 12 to 18 and 40 to 42 each bind GTP; these read GDEGKGK and GHT. D13 serves as the catalytic Proton acceptor. The Mg(2+) site is built by D13 and G40. Residues 13–16, 38–41, T128, R142, Q223, T238, and R302 each bind IMP; these read DEGK and NAGH. H41 acts as the Proton donor in catalysis. 298 to 304 serves as a coordination point for substrate; that stretch reads VNTGRKR. Residues R304, 330-332, and 412-414 each bind GTP; these read KLD and GVG.

The protein belongs to the adenylosuccinate synthetase family. In terms of assembly, homodimer. Requires Mg(2+) as cofactor.

Its subcellular location is the cytoplasm. It carries out the reaction IMP + L-aspartate + GTP = N(6)-(1,2-dicarboxyethyl)-AMP + GDP + phosphate + 2 H(+). It participates in purine metabolism; AMP biosynthesis via de novo pathway; AMP from IMP: step 1/2. Functionally, plays an important role in the de novo pathway of purine nucleotide biosynthesis. Catalyzes the first committed step in the biosynthesis of AMP from IMP. The sequence is that of Adenylosuccinate synthetase from Corynebacterium glutamicum (strain R).